A 360-amino-acid polypeptide reads, in one-letter code: Inward rectifier potassium channel 13 (360 aa).

At 1–50 (MDSRNCKVNAPLLSQRYRRMVTKDGHSTLQMDGAQRGLVYLRDAWGILMD) the chain is on the cytoplasmic side. The chain crosses the membrane as a helical span at residues 51-77 (MRWRWMMLVFSASFVVHWLVFAVLWYA). At 78-105 (VAEMNGDLEIDHDVPPENHTICVKHITS) the chain is on the extracellular side. The helical; Pore-forming intramembrane region spans 106-122 (FTAAFSFSLETQLTIGY). The short motif at 119–124 (TIGYGT) is the Selectivity filter element. Residues 123-131 (GTMFPSGDC) are Extracellular-facing. A helical membrane pass occupies residues 132 to 157 (PSAIALLAIQMLLGLMLEAFITGAFV). At 158–360 (AKIARPKNRA…FQIAETGLTE (203 aa)) the chain is on the cytoplasmic side. Position 201 is a phosphoserine; by PKC (serine 201). Serine 287 carries the phosphoserine; by PKA modification.

The protein belongs to the inward rectifier-type potassium channel (TC 1.A.2.1) family. KCNJ13 subfamily. As to quaternary structure, homotetramer. Interacts with RAB28; the interaction may facilitate cone outer segments phagocytosis. Post-translationally, phosphorylation at Ser-201 by PKC strongly inhibits ionic currents, while phosphorylation at Ser-287 by PKA increases them.

Its subcellular location is the membrane. It localises to the cell membrane. It carries out the reaction K(+)(in) = K(+)(out). With respect to regulation, inhibited by Ba(2+) and Cs(+), although sensitivity to those inhibitors is much lower than in other Kir channels. Functionally, inward rectifier potassium channels are characterized by a greater tendency to allow potassium to flow into the cell rather than out of it. Their voltage dependence is regulated by the concentration of extracellular potassium; as external potassium is raised, the voltage range of the channel opening shifts to more positive voltages. The inward rectification is mainly due to the blockage of outward current by internal magnesium. KCNJ13 has a very low single channel conductance, low sensitivity to block by external barium and cesium, and no dependence of its inward rectification properties on the internal blocking particle magnesium. The sequence is that of Inward rectifier potassium channel 13 (Kcnj13) from Rattus norvegicus (Rat).